Here is a 645-residue protein sequence, read N- to C-terminus: Threonine--tRNA ligase (645 aa).

Positions Met-1–Thr-61 constitute a TGS domain. Residues Asp-243–Pro-534 are catalytic. Positions 334, 385, and 511 each coordinate Zn(2+).

This sequence belongs to the class-II aminoacyl-tRNA synthetase family. Homodimer. It depends on Zn(2+) as a cofactor.

The protein resides in the cytoplasm. It catalyses the reaction tRNA(Thr) + L-threonine + ATP = L-threonyl-tRNA(Thr) + AMP + diphosphate + H(+). Catalyzes the attachment of threonine to tRNA(Thr) in a two-step reaction: L-threonine is first activated by ATP to form Thr-AMP and then transferred to the acceptor end of tRNA(Thr). Also edits incorrectly charged L-seryl-tRNA(Thr). In Marinomonas sp. (strain MWYL1), this protein is Threonine--tRNA ligase.